We begin with the raw amino-acid sequence, 113 residues long: uncharacterized protein (113 aa).

It localises to the cytoplasm. The protein localises to the nucleus. This is an uncharacterized protein from Saccharomyces cerevisiae (strain ATCC 204508 / S288c) (Baker's yeast).